Reading from the N-terminus, the 396-residue chain is MADKGLEDVPEGQIESNYDETVDSFDEMNLKSELLRGIYAYGFERPSAIQQRAIMPVIKGHDVIAQAQSGTGKTATFSISVLQKIDTNVKQCQALILAPTRELAQQIQKVVVAIGDFMNIECHACIGGTSVRDDMKALQDGPQVVVGTPGRVHDMIQRRFLKTDGMKMFVLDEADEMLSRGFTEQIYDIFQLLPQSTQVVLLSATMPQDVLEVTTKFMRDPVRILVKKDELTLEGIKQFYIAVEKEEWKLDTLSDLYETVTITQAVIFCNTRRKVDWLTDKLTARDFTVSAMHGDMDQAQRDLIMKEFRSGSSRVLIATDLLARGIDVQQVSLVINYDLPANRENYIHRIGRGGRFGRKGVAINFVTADDVRMMREIEQFYSTQIEEMPMNVADLI.

Residues 23-51 (DSFDEMNLKSELLRGIYAYGFERPSAIQQ) carry the Q motif motif. Residues 54–224 (IMPVIKGHDV…TKFMRDPVRI (171 aa)) form the Helicase ATP-binding domain. ATP is bound at residue 67–74 (AQSGTGKT). The DEAD box signature appears at 172–175 (DEAD). In terms of domain architecture, Helicase C-terminal spans 235-396 (GIKQFYIAVE…EMPMNVADLI (162 aa)).

Belongs to the DEAD box helicase family. eIF4A subfamily. Component of the eIF4F complex, which composition varies with external and internal environmental conditions. It is composed of at least eIF4A, eIF4E and eIF4G.

The protein localises to the cytoplasm. It catalyses the reaction ATP + H2O = ADP + phosphate + H(+). Its function is as follows. ATP-dependent RNA helicase which is a subunit of the eIF4F complex involved in cap recognition and is required for mRNA binding to ribosome. In the current model of translation initiation, eIF4A unwinds RNA secondary structures in the 5'-UTR of mRNAs which is necessary to allow efficient binding of the small ribosomal subunit, and subsequent scanning for the initiator codon. This is ATP-dependent RNA helicase eIF4A (TIF1) from Pyricularia oryzae (strain 70-15 / ATCC MYA-4617 / FGSC 8958) (Rice blast fungus).